A 276-amino-acid polypeptide reads, in one-letter code: Large ribosomal subunit protein uL2 (276 aa).

Residues 212–276 (NRHRGIRPQT…KLIISRKKHK (65 aa)) are disordered. Residues 257–276 (YKTRKKKASDKLIISRKKHK) are compositionally biased toward basic residues.

Belongs to the universal ribosomal protein uL2 family. Part of the 50S ribosomal subunit. Forms a bridge to the 30S subunit in the 70S ribosome.

One of the primary rRNA binding proteins. Required for association of the 30S and 50S subunits to form the 70S ribosome, for tRNA binding and peptide bond formation. It has been suggested to have peptidyltransferase activity; this is somewhat controversial. Makes several contacts with the 16S rRNA in the 70S ribosome. This chain is Large ribosomal subunit protein uL2, found in Helicobacter pylori (strain P12).